A 413-amino-acid polypeptide reads, in one-letter code: Gamma-glutamyl phosphate reductase (413 aa).

Belongs to the gamma-glutamyl phosphate reductase family.

The protein localises to the cytoplasm. The catalysed reaction is L-glutamate 5-semialdehyde + phosphate + NADP(+) = L-glutamyl 5-phosphate + NADPH + H(+). The protein operates within amino-acid biosynthesis; L-proline biosynthesis; L-glutamate 5-semialdehyde from L-glutamate: step 2/2. Functionally, catalyzes the NADPH-dependent reduction of L-glutamate 5-phosphate into L-glutamate 5-semialdehyde and phosphate. The product spontaneously undergoes cyclization to form 1-pyrroline-5-carboxylate. The protein is Gamma-glutamyl phosphate reductase of Geobacillus sp. (strain WCH70).